The sequence spans 344 residues: Cathepsin B-like cysteine proteinase 5 (344 aa).

Residues 1–15 (MWKLSAILLVAAASA) form the signal peptide. A propeptide spanning residues 16–81 (VVIPGHREAP…DIVATEVSDA (66 aa)) is cleaved from the precursor. 6 cysteine pairs are disulfide-bonded: cysteine 95–cysteine 124, cysteine 107–cysteine 154, cysteine 143–cysteine 213, cysteine 144–cysteine 150, cysteine 183–cysteine 217, and cysteine 191–cysteine 203. Cysteine 110 is a catalytic residue. Active-site residues include histidine 286 and asparagine 306.

It belongs to the peptidase C1 family.

The polypeptide is Cathepsin B-like cysteine proteinase 5 (cpr-5) (Caenorhabditis elegans).